Reading from the N-terminus, the 507-residue chain is Cobyric acid synthase (507 aa).

The GATase cobBQ-type domain maps to 249-451; it reads DIEIAVINLP…IHGIFENREF (203 aa). The active-site Nucleophile is Cys330. The active site involves His443.

The protein belongs to the CobB/CobQ family. CobQ subfamily.

The protein operates within cofactor biosynthesis; adenosylcobalamin biosynthesis. Functionally, catalyzes amidations at positions B, D, E, and G on adenosylcobyrinic A,C-diamide. NH(2) groups are provided by glutamine, and one molecule of ATP is hydrogenolyzed for each amidation. This Thermoanaerobacter sp. (strain X514) protein is Cobyric acid synthase.